An 89-amino-acid chain; its full sequence is MSRTVFCQYEQRDAEGLDFVPYPGELGQRIFNNIGKQAWAAWLAHQTMLINENRLSPRTPEHRAFLEGELVKFLFEKDAEKPAGFTPEA.

This sequence belongs to the Fe(2+)-trafficking protein family.

Could be a mediator in iron transactions between iron acquisition and iron-requiring processes, such as synthesis and/or repair of Fe-S clusters in biosynthetic enzymes. The chain is Probable Fe(2+)-trafficking protein from Stenotrophomonas maltophilia (strain R551-3).